The primary structure comprises 1281 residues: MAQSRRHMSSRTPSGSRMSTEASARPLRVGSRVEVIGKGHRGTVAYVGATLFATGKWVGVILDEAKGKNDGTVQGRKYFTCDEGHGIFVRQSQIQVFEDGADTTSPETPDSSASKVLKREGADAAAKTSKLRGLKPKKAPTARKTTTRRPKPTRPASTGVAGPSSSLGPSGSASAGELSSSEPSTPAQTPLAAPIIPTPALTSPGAAPPLPSPSKEEEGLRAQVRDLEEKLETLRLKRSEDKAKLKELEKHKIQLEQVQEWKSKMQEQQADLQRRLKEARKEAKEALEAKERYMEEMADTADAIEMATLDKEMAEERAESLQQEVEALKERVDELTTDLEILKAEIEEKGSDGAASSYQLKQLEEQNARLKDALVRMRDLSSSEKQEHVKLQKLMEKKNQELEVVRQQRERLQEELSQAESTIDELKEQVDAALGAEEMVEMLTDRNLNLEEKVRELRETVGDLEAMNEMNDELQENARETELELREQLDMAGARVREAQKRVEAAQETVADYQQTIKKYRQLTAHLQDVNRELTNQQEASVERQQQPPPETFDFKIKFAETKAHAKAIEMELRQMEVAQANRHMSLLTAFMPDSFLRPGGDHDCVLVLLLMPRLICKAELIRKQAQEKFDLSENCSERPGLRGAAGEQLSFAAGLVYSLSLLQATLHRYEHALSQCSVDVYKKVGSLYPEMSAHERSLDFLIELLHKDQLDETVNVEPLTKAIKYYQHLYSIHLAEQPEDSTMQLADHIKFTQSALDCMGVEVGRLRAFLQGGQEATDIALLLRDLETSCSDTRQFCKKIRRRMPGTDAPGIPAALAFGSQVSDTLLDCRKHLTWVVAVLQEVAAAAAQLIAPLAENEGLPVAALEELAFKASEQIYGSPSSSPYECLRQSCTILISTMNKLATAMQEGEYDAERPPSKPPPVELRAAALRAEITDAEGLGLKLEDRETVIKELKKSLKIKGEELSEANVRLSLLEKKLDSAAKDADERIEKVQTRLDETQTLLRKKEKDFEETMDALQADIDQLEAEKAELKQRLNSQSKRTIEGLRGPPPSGIATLVSGIAGEEPQRGGAPGQAPGALPGPGLVKDSPLLLQQISAMRLHISQLQHENSILRGAQMKASLAALPPLHVAKLSLPPHEGPGGNLVAGALYRKTSQLLEKLNQLSTHTHVVDITRSSPAAKSPSAQLMEQVAQLKSLSDTIEKLKDEVLKETVTQRPGATVPTDFATFPSSAFLRAKEEQQDDTVYMGKVTFSCAAGLGQRHRLVLTQEQLHQLHSRLIS.

A disordered region spans residues 1 to 26; the sequence is MAQSRRHMSSRTPSGSRMSTEASARP. The segment covering 10–22 has biased composition (polar residues); the sequence is SRTPSGSRMSTEA. The CAP-Gly domain occupies 48-90; sequence GATLFATGKWVGVILDEAKGKNDGTVQGRKYFTCDEGHGIFVR. Residues 100-221 form a disordered region; that stretch reads GADTTSPETP…SPSKEEEGLR (122 aa). Polar residues predominate over residues 102–114; the sequence is DTTSPETPDSSAS. A phosphothreonine mark is found at T108, T145, T146, and T147. A compositionally biased stretch (basic residues) spans 129 to 152; sequence SKLRGLKPKKAPTARKTTTRRPKP. The segment covering 161 to 205 has biased composition (low complexity); sequence AGPSSSLGPSGSASAGELSSSEPSTPAQTPLAAPIIPTPALTSPG. At S179 the chain carries Phosphoserine; by PLK1. S212 is modified (phosphoserine; by CDK1). 3 coiled-coil regions span residues 214 to 547, 943 to 1049, and 1185 to 1214; these read SKEE…RQQQ, LKLE…EGLR, and SAQL…KETV. Residues 911–1281 form an interaction with HPS6 region; sequence EYDAERPPSK…LHQLHSRLIS (371 aa).

It belongs to the dynactin 150 kDa subunit family. As to quaternary structure, monomer and homodimer. Subunit of dynactin, a multiprotein complex part of a tripartite complex with dynein and a adapter, such as BICDL1, BICD2 or HOOK3. The dynactin complex is built around ACTR1A/ACTB filament and consists of an actin-related filament composed of a shoulder domain, a pointed end and a barbed end. Its length is defined by its flexible shoulder domain. The soulder is composed of 2 DCTN1 subunits, 4 DCTN2 and 2 DCTN3. DCTN1/p150(glued) binds directly to microtubules and to cytoplasmic dynein. The 4 DCNT2 (via N-terminus) bind the ACTR1A filament and act as molecular rulers to determine the length. The pointed end is important for binding dynein-dynactin cargo adapters. Consists of 4 subunits: ACTR10, DCNT4, DCTN5 and DCTN6. The barbed end is composed of a CAPZA1:CAPZB heterodimers, which binds ACTR1A/ACTB filament and dynactin and stabilizes dynactin. Interacts with the C-terminus of MAPRE1, MAPRE2 and MAPRE3. Interacts with FBXL5. Interacts with ECPAS. Interacts with CLIP1. Interacts with CLN3 and DYNAP. Interacts with MISP; this interaction regulates its distribution at the cell cortex. Interacts with CEP131. Interacts with CEP126. Interacts with dynein intermediate chain and dynein heavy chain. Interacts with PLK1 (via POLO-box domain). Interacts with TBCB and PARD6A. Binds preferentially to tyrosinated microtubules than to detyrosinated microtubules. Interacts with KIF3A. Interacts with HPS6. Interacts with SNX6. Interacts with BICD2. Interacts with DST (isoform 1). Identified in a complex with MREG and RILP. Interacts with BCCIP. Interacts with DCDC1. Interacts with AKNA. Interacts with DYNC1I2. Interacts with RUFY3 and RUFY4. In terms of processing, ubiquitinated by a SCF complex containing FBXL5, leading to its degradation by the proteasome. Post-translationally, phosphorylation by SLK at Thr-145, Thr-146 and Thr-147 targets DCTN1 to the centrosome. It is uncertain if SLK phosphorylates all three threonines or one or two of them. PLK1-mediated phosphorylation at Ser-179 is essential for its localization in the nuclear envelope and promotes its dissociation from microtubules during early mitosis and positively regulates nuclear envelope breakdown during prophase.

It is found in the cytoplasm. Its subcellular location is the cytoskeleton. The protein localises to the microtubule organizing center. The protein resides in the centrosome. It localises to the centriole. It is found in the spindle. Its subcellular location is the nucleus envelope. The protein localises to the cell cortex. In terms of biological role, part of the dynactin complex that activates the molecular motor dynein for ultra-processive transport along microtubules. Plays a key role in dynein-mediated retrograde transport of vesicles and organelles along microtubules by recruiting and tethering dynein to microtubules. Binds to both dynein and microtubules providing a link between specific cargos, microtubules and dynein. Essential for targeting dynein to microtubule plus ends, recruiting dynein to membranous cargos and enhancing dynein processivity (the ability to move along a microtubule for a long distance without falling off the track). Can also act as a brake to slow the dynein motor during motility along the microtubule. Can regulate microtubule stability by promoting microtubule formation, nucleation and polymerization and by inhibiting microtubule catastrophe in neurons. Inhibits microtubule catastrophe by binding both to microtubules and to tubulin, leading to enhanced microtubule stability along the axon. Plays a role in metaphase spindle orientation. Plays a role in centriole cohesion and subdistal appendage organization and function. Its recruitment to the centriole in a KIF3A-dependent manner is essential for the maintenance of centriole cohesion and the formation of subdistal appendage. Also required for microtubule anchoring at the mother centriole. Plays a role in primary cilia formation. The chain is Dynactin subunit 1 (Dctn1) from Mus musculus (Mouse).